The primary structure comprises 237 residues: Type II secretion system protein J (237 aa).

Positions 1–6 (MRLQRG) are cleaved as a propeptide — leader sequence. The residue at position 7 (F7) is an N-methylphenylalanine. A helical transmembrane segment spans residues 7–29 (FTLLELLIAIAIFALLALATYRM). A disordered region spans residues 203–237 (PLKQDQPQGQPGGENGENGEGGVPQPPEGMPGAPE). Residues 212–224 (QPGGENGENGEGG) are compositionally biased toward gly residues. Over residues 226-237 (PQPPEGMPGAPE) the composition is skewed to pro residues.

It belongs to the GSP J family. Type II secretion is composed of four main components: the outer membrane complex, the inner membrane complex, the cytoplasmic secretion ATPase and the periplasm-spanning pseudopilus. Forms the tip of the type II pseudopilus by interacting with XcpV, XcpU and XcpX. Interacts with core component XcpT. Post-translationally, cleaved by prepilin peptidase. Methylated by prepilin peptidase at the amino group of the N-terminal phenylalanine once the leader sequence is cleaved by prepilin peptidase.

Its subcellular location is the cell inner membrane. Functionally, component of the type II secretion system required for the energy-dependent secretion of extracellular factors such as proteases and toxins from the periplasm. Part of the pseudopilus tip complex that is critical for the recognition and binding of secretion substrates. Type II pseudopilus confers increased bacterial adhesive capabilities. This Pseudomonas aeruginosa (strain ATCC 15692 / DSM 22644 / CIP 104116 / JCM 14847 / LMG 12228 / 1C / PRS 101 / PAO1) protein is Type II secretion system protein J (xcpW).